We begin with the raw amino-acid sequence, 275 residues long: 3-methyl-2-oxobutanoate hydroxymethyltransferase (275 aa).

Positions 44 and 83 each coordinate Mg(2+). 3-methyl-2-oxobutanoate is bound by residues 44 to 45 (DS), Asp83, and Lys113. Glu115 contributes to the Mg(2+) binding site. Glu182 serves as the catalytic Proton acceptor.

Belongs to the PanB family. As to quaternary structure, homodecamer; pentamer of dimers. Mg(2+) is required as a cofactor.

The protein localises to the cytoplasm. The catalysed reaction is 3-methyl-2-oxobutanoate + (6R)-5,10-methylene-5,6,7,8-tetrahydrofolate + H2O = 2-dehydropantoate + (6S)-5,6,7,8-tetrahydrofolate. Its pathway is cofactor biosynthesis; (R)-pantothenate biosynthesis; (R)-pantoate from 3-methyl-2-oxobutanoate: step 1/2. Its function is as follows. Catalyzes the reversible reaction in which hydroxymethyl group from 5,10-methylenetetrahydrofolate is transferred onto alpha-ketoisovalerate to form ketopantoate. The protein is 3-methyl-2-oxobutanoate hydroxymethyltransferase of Clostridium botulinum (strain Loch Maree / Type A3).